Reading from the N-terminus, the 406-residue chain is Probable tRNA sulfurtransferase (406 aa).

The THUMP domain occupies E60 to K166. Residues M184–L185, H209–F210, R266, G288, and Q297 contribute to the ATP site.

The protein belongs to the ThiI family.

It is found in the cytoplasm. It catalyses the reaction [ThiI sulfur-carrier protein]-S-sulfanyl-L-cysteine + a uridine in tRNA + 2 reduced [2Fe-2S]-[ferredoxin] + ATP + H(+) = [ThiI sulfur-carrier protein]-L-cysteine + a 4-thiouridine in tRNA + 2 oxidized [2Fe-2S]-[ferredoxin] + AMP + diphosphate. The enzyme catalyses [ThiS sulfur-carrier protein]-C-terminal Gly-Gly-AMP + S-sulfanyl-L-cysteinyl-[cysteine desulfurase] + AH2 = [ThiS sulfur-carrier protein]-C-terminal-Gly-aminoethanethioate + L-cysteinyl-[cysteine desulfurase] + A + AMP + 2 H(+). Its pathway is cofactor biosynthesis; thiamine diphosphate biosynthesis. Its function is as follows. Catalyzes the ATP-dependent transfer of a sulfur to tRNA to produce 4-thiouridine in position 8 of tRNAs, which functions as a near-UV photosensor. Also catalyzes the transfer of sulfur to the sulfur carrier protein ThiS, forming ThiS-thiocarboxylate. This is a step in the synthesis of thiazole, in the thiamine biosynthesis pathway. The sulfur is donated as persulfide by IscS. In Limosilactobacillus fermentum (strain NBRC 3956 / LMG 18251) (Lactobacillus fermentum), this protein is Probable tRNA sulfurtransferase.